Consider the following 368-residue polypeptide: DNA replication and repair protein RecF (368 aa).

Residue 30-37 participates in ATP binding; it reads GDNGAGKT.

Belongs to the RecF family.

It localises to the cytoplasm. The RecF protein is involved in DNA metabolism; it is required for DNA replication and normal SOS inducibility. RecF binds preferentially to single-stranded, linear DNA. It also seems to bind ATP. This Xanthomonas campestris pv. campestris (strain 8004) protein is DNA replication and repair protein RecF.